The chain runs to 247 residues: UPF0280 protein MMP1236 (247 aa).

This sequence belongs to the UPF0280 family.

This chain is UPF0280 protein MMP1236, found in Methanococcus maripaludis (strain DSM 14266 / JCM 13030 / NBRC 101832 / S2 / LL).